Here is a 318-residue protein sequence, read N- to C-terminus: MATENKILILGPTGAIGRHIVWASIKAGNPTYALVRKTPGNVNKPKLITAANPETKEELIDNYQSLGVILLEGDINDHETLVKAIKQVDIVICAAGRLLIEDQVKIIKAIKEAGNVKKFFPSEFGLDVDRHEAVEPVRQVFEEKASIRRVIEAEGVPYTYLCCHAFTGYFLRNLAQLDTTDPPRDKVVILGDGNVKGAYVTEADVGTFTIRAANDPNTLNKAVHIRLPENYLTQNEVIALWEKKIGKTLEKTYVSEEQVLKDIQESSFPHNYLLALYHSQQIKGDAVYEIDPAKDIEASEAYPDVTYTTADEYLNQFV.

NADP(+)-binding positions include 11-17 (GPTGAIG), Arg36, and Lys44. The active-site Proton acceptor is Lys144. Position 148 (Arg148) interacts with NADP(+).

It belongs to the NmrA-type oxidoreductase family. Isoflavone reductase subfamily.

The catalysed reaction is (3R)-vestitone + NADP(+) = 2'-hydroxyformononetin + NADPH + 2 H(+). It functions in the pathway phytoalexin biosynthesis; pterocarpan phytoalexin biosynthesis. Reduces achiral isoflavones to chiral isoflavanones during the biosynthesis of chiral pterocarpan phytoalexins. The reduction product is a third isomer, which represents the penultimate intermediate in the synthesis of the phytoalexin (-)-medicarpin, the major phytoalexin in Alfalfa. The protein is Isoflavone reductase of Medicago sativa (Alfalfa).